A 424-amino-acid polypeptide reads, in one-letter code: tRNA modification GTPase MnmE (424 aa).

(6S)-5-formyl-5,6,7,8-tetrahydrofolate-binding residues include arginine 20, glutamate 77, and arginine 117. The TrmE-type G domain occupies 212–351 (GVRVVFAGPP…LVRDLRDAAR (140 aa)). A K(+)-binding site is contributed by asparagine 222. Residues 222-227 (NAGKST), 241-247 (SPIAGTT), and 266-269 (DTAG) contribute to the GTP site. Serine 226 serves as a coordination point for Mg(2+). Residues serine 241, isoleucine 243, and threonine 246 each coordinate K(+). Residue threonine 247 participates in Mg(2+) binding. Lysine 424 contributes to the (6S)-5-formyl-5,6,7,8-tetrahydrofolate binding site.

This sequence belongs to the TRAFAC class TrmE-Era-EngA-EngB-Septin-like GTPase superfamily. TrmE GTPase family. In terms of assembly, homodimer. Heterotetramer of two MnmE and two MnmG subunits. K(+) is required as a cofactor.

The protein localises to the cytoplasm. Its function is as follows. Exhibits a very high intrinsic GTPase hydrolysis rate. Involved in the addition of a carboxymethylaminomethyl (cmnm) group at the wobble position (U34) of certain tRNAs, forming tRNA-cmnm(5)s(2)U34. This is tRNA modification GTPase MnmE from Erythrobacter litoralis (strain HTCC2594).